A 567-amino-acid chain; its full sequence is DNA ligase (567 aa).

E260 is an ATP binding site. K262 serves as the catalytic N6-AMP-lysine intermediate. ATP is bound by residues R267, R282, E312, F352, R427, and K433.

The protein belongs to the ATP-dependent DNA ligase family. Mg(2+) serves as cofactor.

The catalysed reaction is ATP + (deoxyribonucleotide)n-3'-hydroxyl + 5'-phospho-(deoxyribonucleotide)m = (deoxyribonucleotide)n+m + AMP + diphosphate.. DNA ligase that seals nicks in double-stranded DNA during DNA replication, DNA recombination and DNA repair. The chain is DNA ligase from Methanococcoides burtonii (strain DSM 6242 / NBRC 107633 / OCM 468 / ACE-M).